The chain runs to 152 residues: Syntaxin-8A (152 aa).

Residues 1-14 (MNNNNNFNSNFNSN) are compositionally biased toward low complexity. The segment at 1–22 (MNNNNNFNSNFNSNRISSTQPY) is disordered. Residues 1–131 (MNNNNNFNSN…LTQQSKTTGY (131 aa)) are Cytoplasmic-facing. Positions 60-122 (KRDMEEQDKM…RNTTKNLITL (63 aa)) constitute a t-SNARE coiled-coil homology domain. The helical; Anchor for type IV membrane protein transmembrane segment at 132 to 152 (CSAICFLLLVLLVIIILASVL) threads the bilayer.

This sequence belongs to the syntaxin family. Component of the SNARE complex composed of syn7A, syn8A, vamp7A and vti1A.

It localises to the endosome membrane. Functionally, involved in the targeting and/or fusion of transport vesicles to their target membrane during transport of proteins from the early endosome to the lysosome. Required for fusion of late endosomes with lysosomes and homotypic lysosomal fusion. This Dictyostelium discoideum (Social amoeba) protein is Syntaxin-8A.